The chain runs to 434 residues: 3-phosphoshikimate 1-carboxyvinyltransferase (434 aa).

3-phosphoshikimate is bound by residues Lys-15, Ser-16, and Arg-20. Lys-15 is a phosphoenolpyruvate binding site. Positions 96 and 124 each coordinate phosphoenolpyruvate. 3-phosphoshikimate contacts are provided by Ser-169, Gln-171, Ser-195, Asp-319, and Lys-346. Gln-171 lines the phosphoenolpyruvate pocket. The Proton acceptor role is filled by Asp-319. Phosphoenolpyruvate-binding residues include Arg-350 and Arg-394.

Belongs to the EPSP synthase family. Monomer.

The protein localises to the cytoplasm. It catalyses the reaction 3-phosphoshikimate + phosphoenolpyruvate = 5-O-(1-carboxyvinyl)-3-phosphoshikimate + phosphate. Its pathway is metabolic intermediate biosynthesis; chorismate biosynthesis; chorismate from D-erythrose 4-phosphate and phosphoenolpyruvate: step 6/7. Functionally, catalyzes the transfer of the enolpyruvyl moiety of phosphoenolpyruvate (PEP) to the 5-hydroxyl of shikimate-3-phosphate (S3P) to produce enolpyruvyl shikimate-3-phosphate and inorganic phosphate. The sequence is that of 3-phosphoshikimate 1-carboxyvinyltransferase from Prosthecochloris aestuarii (strain DSM 271 / SK 413).